Consider the following 488-residue polypeptide: Cytochrome P450 71A24 (488 aa).

A helical membrane pass occupies residues 3-23 (MMMMIILLLCSIILITILFFK). Cys-433 serves as a coordination point for heme.

The protein belongs to the cytochrome P450 family. Heme is required as a cofactor.

It localises to the membrane. The polypeptide is Cytochrome P450 71A24 (CYP71A24) (Arabidopsis thaliana (Mouse-ear cress)).